A 236-amino-acid chain; its full sequence is 3-deoxy-D-manno-octulosonic acid kinase (236 aa).

Residue D166 is part of the active site.

The protein belongs to the protein kinase superfamily. KdkA/RfaP family.

Its subcellular location is the cell inner membrane. The enzyme catalyses an alpha-Kdo-(2-&gt;6)-lipid IVA + ATP = a 4-O-phospho-alpha-Kdo-(2-&gt;6)-lipid IVA + ADP + H(+). The protein operates within bacterial outer membrane biogenesis; LPS core biosynthesis. In terms of biological role, catalyzes the ATP-dependent phosphorylation of the 3-deoxy-D-manno-octulosonic acid (Kdo) residue in Kdo-lipid IV(A) at the 4-OH position. The sequence is that of 3-deoxy-D-manno-octulosonic acid kinase from Photobacterium profundum (strain SS9).